A 241-amino-acid chain; its full sequence is Geranylgeranylglyceryl phosphate synthase (241 aa).

Mg(2+)-binding residues include Asp-26 and Ser-52. Residues 172–178 (YFEAGSG), 204–205 (GG), and 226–227 (GT) each bind sn-glycerol 1-phosphate.

It belongs to the GGGP/HepGP synthase family. Group II subfamily. Mg(2+) is required as a cofactor.

It localises to the cytoplasm. It catalyses the reaction sn-glycerol 1-phosphate + (2E,6E,10E)-geranylgeranyl diphosphate = sn-3-O-(geranylgeranyl)glycerol 1-phosphate + diphosphate. Its pathway is membrane lipid metabolism; glycerophospholipid metabolism. In terms of biological role, prenyltransferase that catalyzes the transfer of the geranylgeranyl moiety of geranylgeranyl diphosphate (GGPP) to the C3 hydroxyl of sn-glycerol-1-phosphate (G1P). This reaction is the first ether-bond-formation step in the biosynthesis of archaeal membrane lipids. The protein is Geranylgeranylglyceryl phosphate synthase of Hyperthermus butylicus (strain DSM 5456 / JCM 9403 / PLM1-5).